A 457-amino-acid chain; its full sequence is Glycoprotein endo-alpha-1,2-mannosidase-like protein (457 aa).

Residues 1–8 lie on the Cytoplasmic side of the membrane; sequence MARRRRRA. A helical; Signal-anchor for type II membrane protein membrane pass occupies residues 9 to 29; the sequence is CIALFLVLLFAFGTLMGLRTL. The Lumenal segment spans residues 30-457; sequence KAPDGLPALG…FIKEKEQWLM (428 aa). A disordered region spans residues 46–93; it reads PFERRPEGAPAPAARAPAAPAAPPPPPPPPRTADPGGSPGPAPAEAEP. Low complexity predominate over residues 53 to 64; sequence GAPAPAARAPAA. A compositionally biased stretch (pro residues) spans 65-87; sequence PAAPPPPPPPPRTADPGGSPGPA.

Belongs to the glycosyl hydrolase 99 family.

The protein resides in the golgi apparatus membrane. The protein is Glycoprotein endo-alpha-1,2-mannosidase-like protein (MANEAL) of Homo sapiens (Human).